We begin with the raw amino-acid sequence, 134 residues long: MDDEYLALLDRAYKLVSPKAQRRAEIPKIEVVNMPRKTIIQNFGAIAKRLNRDVYLMAKFFQKELAVPGTVEGDVFTLHGEKSPKVVEAVYERFIKYYVVCPVCNSIDTELRREGRIFVLHCLACGASTPVRPL.

It belongs to the eIF-2-beta/eIF-5 family. In terms of assembly, heterotrimer composed of an alpha, a beta and a gamma chain.

Functionally, eIF-2 functions in the early steps of protein synthesis by forming a ternary complex with GTP and initiator tRNA. The chain is Translation initiation factor 2 subunit beta from Pyrobaculum calidifontis (strain DSM 21063 / JCM 11548 / VA1).